Here is a 397-residue protein sequence, read N- to C-terminus: MAKEKFDRSLPHVNVGTIGHVDHGKTTLTAALTRVCSEVFGSAVVEFDKIDSAPEEKARGITINTAHVEYNSNIRHYAHVDCPGHADYVKNMITGAAQMDGAILVCSAADGPMPQTREHILLSRQVGVPYIVVFLNKADLVDDAELLELVEMEVRDLLSTYDFPGDDTPIIIGSARMALEGKDDNEMGTTAVKKLVETLDSYIPEPERAIDKPFLMPIEDVFSISGRGTVVTGRIERGIVRVQDALEIVGLRDTTTTTCTGVEMFRKLLDEGRAGENCGVLLRGTKRDDVERGQVLVKPGSVKPHTKFTAEVYVLSKEEGGRHTPFFKGYRPQFYFRTTDVTGNCELPEGVEMVMPGDNIQMTVTLIKTIAMEDGLRFAIREGGRTVGAGVVAKIIE.

A tr-type G domain is found at 10-207; the sequence is LPHVNVGTIG…TLDSYIPEPE (198 aa). A G1 region spans residues 19–26; sequence GHVDHGKT. 19-26 contacts GTP; the sequence is GHVDHGKT. A Mg(2+)-binding site is contributed by Thr26. The interval 60–64 is G2; sequence GITIN. A G3 region spans residues 81–84; that stretch reads DCPG. GTP-binding positions include 81 to 85 and 136 to 139; these read DCPGH and NKAD. A G4 region spans residues 136–139; it reads NKAD. Positions 174-176 are G5; that stretch reads SAR.

This sequence belongs to the TRAFAC class translation factor GTPase superfamily. Classic translation factor GTPase family. EF-Tu/EF-1A subfamily. As to quaternary structure, monomer.

The protein localises to the cytoplasm. It carries out the reaction GTP + H2O = GDP + phosphate + H(+). Its function is as follows. GTP hydrolase that promotes the GTP-dependent binding of aminoacyl-tRNA to the A-site of ribosomes during protein biosynthesis. This is Elongation factor Tu from Pseudomonas fluorescens (strain Pf0-1).